The primary structure comprises 645 residues: Homeobox protein B-H2 (645 aa).

Disordered regions lie at residues 1 to 50 (MTTM…TTAT), 86 to 134 (SSGG…QAAL), 149 to 176 (RERE…AHHP), 240 to 259 (SHLS…HDER), 265 to 385 (MLQQ…KART), and 553 to 645 (GAQQ…ALEV). The span at 18–29 (SAPSATAHHPAA) shows a compositional bias: low complexity. Basic residues predominate over residues 106–121 (QHHHHHQQQQQHHHHQ). The span at 122-134 (QQQQQQQHQQAAL) shows a compositional bias: low complexity. The segment covering 149 to 165 (REREREREREHYRERHS) has biased composition (basic and acidic residues). Residues 244 to 253 (HQQHHPHLHH) show a composition bias toward basic residues. Positions 275–316 (NNNNNNNNSSSASNNNNNNNNSASANSNIISGNSSSSNNNNG) are enriched in low complexity. Over residues 317 to 328 (SGNGNMLLGGPG) the composition is skewed to gly residues. Residues 329 to 339 (SSISGDQASTI) are compositionally biased toward polar residues. Low complexity predominate over residues 362 to 377 (SSANGDSSSHLSLSLS). Positions 380–439 (QRKARTAFTDHQLQTLEKSFERQKYLSVQDRMELANKLELSDCQVKTWYQNRRTKWKRQT) form a DNA-binding region, homeobox. Residues 553 to 574 (GAQQQQQQPPAASRSPATSQSA) show a composition bias toward low complexity. Residues 583–592 (TSSSSRQRLI) are compositionally biased toward polar residues. Position 593 is a phosphothreonine (T593). Residues 594-603 (PSPPLNPGSP) show a composition bias toward pro residues. A phosphoserine mark is found at S595 and S602. Basic and acidic residues predominate over residues 618-632 (DEERDIERERERERE). Acidic residues predominate over residues 633 to 645 (RDEDDEEELALEV).

The protein belongs to the Antp homeobox family. In terms of tissue distribution, B-H1 and B-H2 are abundant in the eye-antenna imaginal disk. Expressed in R1 and R6 cells throughout larval stage until 30 hours after puparium formation, at which time expression is seen in the anterior and posterior primary pigment cells. Coexpressed in embryonic glial cells, neurons of the CNS and PNS, most latitudinal anterior cells of the developing notum and the central circular region of the leg and antennal imaginal disk throughout larval development.

Its subcellular location is the nucleus. In terms of biological role, B-H1 and B-H2 are regulated by members of the wg signaling pathway; wg and dpp. B-H1 and B-H2 are coexpressed and functionally required in R1 and R6 receptor cells and primary pigment cells for normal eye development. Coexpression is also required for the fate determination of external sensory organs, formation of notal microchaetae, formation of presutural macrochaetae, antennal development and for distal leg morphogenesis; segmentation and specification of tarsal segments 3-5. The chain is Homeobox protein B-H2 (B-H2) from Drosophila melanogaster (Fruit fly).